A 157-amino-acid chain; its full sequence is Universal stress protein Sll1654 (157 aa).

This sequence belongs to the universal stress protein A family.

In Synechocystis sp. (strain ATCC 27184 / PCC 6803 / Kazusa), this protein is Universal stress protein Sll1654.